The following is a 64-amino-acid chain: Prokaryotic ubiquitin-like protein Pup (64 aa).

The segment at 1 to 32 (MNAKQTQIMGGGGRDEDNAEDSAQASGQVQIN) is disordered. Residues 20–58 (EDSAQASGQVQINTEGVDSLLDEIDGLLENNAEEFVRSY) are ARC ATPase binding. The span at 21-32 (DSAQASGQVQIN) shows a compositional bias: polar residues. An Isoglutamyl lysine isopeptide (Glu-Lys) (interchain with K-? in acceptor proteins) cross-link involves residue Glu64.

Belongs to the prokaryotic ubiquitin-like protein family. As to quaternary structure, strongly interacts with the proteasome-associated ATPase ARC through a hydrophobic interface; the interacting region of Pup lies in its C-terminal half. There is one Pup binding site per ARC hexamer ring.

Its pathway is protein degradation; proteasomal Pup-dependent pathway. Functionally, protein modifier that is covalently attached to lysine residues of substrate proteins, thereby targeting them for proteasomal degradation. The tagging system is termed pupylation. In Corynebacterium glutamicum (strain R), this protein is Prokaryotic ubiquitin-like protein Pup.